A 226-amino-acid chain; its full sequence is Urease accessory protein UreF (226 aa).

It belongs to the UreF family. As to quaternary structure, ureD, UreF and UreG form a complex that acts as a GTP-hydrolysis-dependent molecular chaperone, activating the urease apoprotein by helping to assemble the nickel containing metallocenter of UreC. The UreE protein probably delivers the nickel.

It is found in the cytoplasm. Required for maturation of urease via the functional incorporation of the urease nickel metallocenter. The polypeptide is Urease accessory protein UreF (Nitrosospira multiformis (strain ATCC 25196 / NCIMB 11849 / C 71)).